We begin with the raw amino-acid sequence, 115 residues long: Large ribosomal subunit protein bL19 (115 aa).

This sequence belongs to the bacterial ribosomal protein bL19 family.

This protein is located at the 30S-50S ribosomal subunit interface and may play a role in the structure and function of the aminoacyl-tRNA binding site. The protein is Large ribosomal subunit protein bL19 of Coxiella burnetii (strain CbuK_Q154) (Coxiella burnetii (strain Q154)).